A 257-amino-acid polypeptide reads, in one-letter code: Discoidin-2 (257 aa).

The segment at 1–155 is beta-sandwich; that stretch reads MSVPAGSVSC…SLRWELYALP (155 aa). The region spanning 10–154 is the F5/8 type C domain; the sequence is CLANALLNLR…ISLRWELYAL (145 aa). Ca(2+) is bound by residues Asn39, Ser40, and Asp47. The Cell attachment site signature appears at 81-83; sequence RGD. At His84 the chain carries Phosphohistidine. The linker stretch occupies residues 156 to 162; the sequence is VKSYSNP. The segment at 163 to 257 is lectin-like; that stretch reads SVQVGEVSIG…FDYVAVEFNN (95 aa). Residues Asp209, Arg218, and Trp238 each contribute to the a carbohydrate site.

As to quaternary structure, homotrimer. Post-translationally, the N-terminus is blocked. Maturing spore cells.

Galactose-binding lectin. May be necessary for the primary process of spore formation and may be involved in spore coat formation. This chain is Discoidin-2 (dscE), found in Dictyostelium discoideum (Social amoeba).